The primary structure comprises 459 residues: Probable PTS system sucrose-specific EIIBC component (459 aa).

Positions 1 to 86 (MHKEIAKELL…VHVWETAPSE (86 aa)) constitute a PTS EIIB type-1 domain. Catalysis depends on cysteine 25, which acts as the Phosphocysteine intermediate; for EIIB activity. The region spanning 106 to 459 (KTLSDIFVPI…LFLGFKEETE (354 aa)) is the PTS EIIC type-1 domain. Helical transmembrane passes span 111 to 131 (IFVPIIPAITASGLLMGLIGM), 147 to 167 (MLDLVSSTAFILLPILVGFSA), 177 to 197 (LGAVIAGLLTHPDLLDPSMLG), 209 to 229 (LHIPMMGYQGSMIPILLSVFV), 245 to 265 (LDVVIIPFITVMVTGCLALIV), 288 to 308 (AGIAAGALFGGIYSTIVLSGL), 329 to 349 (FLVPIWSMANVAQGGAGLAVF), 360 to 380 (IALPASLTAFLGIVEPIVFGV), 388 to 408 (FIGAAIGGAIGGAYVVAVQVV), 412 to 432 (YGLTGIPMISIVLPFGAANFV), and 434 to 454 (YMIGFLIAAVSAFIATLFLGF).

It is found in the cell membrane. The phosphoenolpyruvate-dependent sugar phosphotransferase system (sugar PTS), a major carbohydrate active -transport system, catalyzes the phosphorylation of incoming sugar substrates concomitantly with their translocation across the cell membrane. This system may be involved in sucrose transport. The EIIB domain is mainly phosphorylated by the EIIA domains of GamP and PtsA/YpqE. Its function is as follows. Negatively regulates SacY activity by catalyzing its phosphorylation on 'His-99'. The chain is Probable PTS system sucrose-specific EIIBC component (sacX) from Bacillus subtilis (strain 168).